The following is a 130-amino-acid chain: Ribonuclease VapC22 (130 aa).

A PINc domain is found at 4 to 119 (VLLDSHVAYW…RLVTKDRRLR (116 aa)). Mg(2+) is bound by residues Asp-7 and Asp-97.

The protein belongs to the PINc/VapC protein family. Mg(2+) is required as a cofactor.

It localises to the secreted. Functionally, toxic component of a type II toxin-antitoxin (TA) system. An RNase. Upon expression in M.smegmatis inhibits translation and colony formation. Its toxic effect on colony formation is neutralized by coexpression with cognate antitoxin VapB22; the effect on translation has not been tested but is probably neutralized also. This chain is Ribonuclease VapC22, found in Mycobacterium tuberculosis (strain ATCC 25618 / H37Rv).